Consider the following 112-residue polypeptide: Omega-agatoxin-1A (112 aa).

An N-terminal signal peptide occupies residues 1–19 (MMKFVVFLACLFVAAHSFA). Positions 20–36 (VEGEEEYFEAEVPELER) are excised as a propeptide. Residues 103–109 (RSEESER) constitute a propeptide, glu-rich.

This sequence belongs to the neurotoxin 04 (omega-agtx) family. 01 (type I omega-agtx) subfamily. Heterodimer of two subunits, a major chain and a minor chain, linked by a disulfide bond. Post-translationally, proteolytically processed to yield the major and the minor chains. In terms of tissue distribution, expressed by the venom gland.

It localises to the secreted. Omega-agatoxins are antagonists of voltage-gated calcium channels. They block insect neuromuscular transmission presynaptically. This toxin is a blocker of L-type calcium channels (Cav/CACNA1). This chain is Omega-agatoxin-1A, found in Agelenopsis aperta (North American funnel-web spider).